The primary structure comprises 411 residues: Tyrosine--tRNA ligase (411 aa).

Positions 48–57 (PTAPDIHLGH) match the 'HIGH' region motif. The 'KMSKS' region signature appears at 232-236 (KMSKS). K235 is a binding site for ATP. An S4 RNA-binding domain is found at 347–409 (VLLPKVLFSA…GKRRFLKIIF (63 aa)).

Belongs to the class-I aminoacyl-tRNA synthetase family. TyrS type 2 subfamily. In terms of assembly, homodimer.

The protein localises to the cytoplasm. It catalyses the reaction tRNA(Tyr) + L-tyrosine + ATP = L-tyrosyl-tRNA(Tyr) + AMP + diphosphate + H(+). Its function is as follows. Catalyzes the attachment of tyrosine to tRNA(Tyr) in a two-step reaction: tyrosine is first activated by ATP to form Tyr-AMP and then transferred to the acceptor end of tRNA(Tyr). The polypeptide is Tyrosine--tRNA ligase (Carboxydothermus hydrogenoformans (strain ATCC BAA-161 / DSM 6008 / Z-2901)).